Consider the following 249-residue polypeptide: Ubiquinone/menaquinone biosynthesis C-methyltransferase UbiE (249 aa).

S-adenosyl-L-methionine is bound by residues threonine 72, aspartate 93, and 121-122 (NA).

Belongs to the class I-like SAM-binding methyltransferase superfamily. MenG/UbiE family.

The enzyme catalyses a 2-demethylmenaquinol + S-adenosyl-L-methionine = a menaquinol + S-adenosyl-L-homocysteine + H(+). It carries out the reaction a 2-methoxy-6-(all-trans-polyprenyl)benzene-1,4-diol + S-adenosyl-L-methionine = a 5-methoxy-2-methyl-3-(all-trans-polyprenyl)benzene-1,4-diol + S-adenosyl-L-homocysteine + H(+). It participates in quinol/quinone metabolism; menaquinone biosynthesis; menaquinol from 1,4-dihydroxy-2-naphthoate: step 2/2. The protein operates within cofactor biosynthesis; ubiquinone biosynthesis. Methyltransferase required for the conversion of demethylmenaquinol (DMKH2) to menaquinol (MKH2) and the conversion of 2-polyprenyl-6-methoxy-1,4-benzoquinol (DDMQH2) to 2-polyprenyl-3-methyl-6-methoxy-1,4-benzoquinol (DMQH2). This Hahella chejuensis (strain KCTC 2396) protein is Ubiquinone/menaquinone biosynthesis C-methyltransferase UbiE.